A 190-amino-acid chain; its full sequence is Ribosome hibernation promotion factor (190 aa).

Residues 101-190 (RDRGDQEVFV…KYGLIQTSEQ (90 aa)) are required for ribosome-binding.

It belongs to the HPF/YfiA ribosome-associated protein family. Long HPF subfamily. In terms of assembly, interacts with 100S ribosomes during exponential growth, as 100S ribosomes decrease (after 28 hours) also found associated with 30s and 50S subunits.

The protein localises to the cytoplasm. In terms of biological role, required and sufficient for dimerization of active 70S ribosomes into 100S ribosomes. 110S ribosomes are probably translationally inactive and may serve as a reservoir of easily reactivated ribosomes when necessary in the cell. Also reduces the translation efficiency of a small number of genes. Unlike E.coli, 100S ribosomes are present during exponential growth and decrease during stationary phase. This strain produces 30% fewer 100S ribosomes than strain N315 and RN4200 under the same growth conditions. The sequence is that of Ribosome hibernation promotion factor from Staphylococcus aureus (strain USA300).